The primary structure comprises 119 residues: MEAKAIARHVRVTPRKARRMVDLIRGKKATEAVTILKFAPQAAALPVRKTLESAIANARVKADKAGEPFRENDLYIKETYVDEGVTLKRFRARAQGRAARINKRTSHITVVVANKEGAR.

Belongs to the universal ribosomal protein uL22 family. As to quaternary structure, part of the 50S ribosomal subunit.

In terms of biological role, this protein binds specifically to 23S rRNA; its binding is stimulated by other ribosomal proteins, e.g. L4, L17, and L20. It is important during the early stages of 50S assembly. It makes multiple contacts with different domains of the 23S rRNA in the assembled 50S subunit and ribosome. Its function is as follows. The globular domain of the protein is located near the polypeptide exit tunnel on the outside of the subunit, while an extended beta-hairpin is found that lines the wall of the exit tunnel in the center of the 70S ribosome. This Bifidobacterium longum (strain DJO10A) protein is Large ribosomal subunit protein uL22.